Here is a 453-residue protein sequence, read N- to C-terminus: Septin-10 (453 aa).

The interval K18–S43 is disordered. The span at S27–P37 shows a compositional bias: basic and acidic residues. A Septin-type G domain is found at Q62–E328. The G1 motif stretch occupies residues G72 to S79. GTP-binding positions include G72–S79, G127, K208–E216, G262, and R277. A G3 motif region spans residues N124 to G127. Positions A207–D210 are G4 motif. The segment at T433 to M453 is disordered. The span at L441–M453 shows a compositional bias: basic and acidic residues.

The protein belongs to the TRAFAC class TrmE-Era-EngA-EngB-Septin-like GTPase superfamily. Septin GTPase family. Septins polymerize into heterooligomeric protein complexes that form filaments, and can associate with cellular membranes, actin filaments and microtubules. GTPase activity is required for filament formation. Interacts with ADGB. Post-translationally, proteolytically cleaved in vitro in a calmodulin-dependent manner.

Its subcellular location is the cytoplasm. It is found in the cytoskeleton. The protein resides in the cell projection. It localises to the cilium. The protein localises to the flagellum. Its function is as follows. Filament-forming cytoskeletal GTPase. May play a role in cytokinesis (Potential). The sequence is that of Septin-10 from Bos taurus (Bovine).